A 424-amino-acid polypeptide reads, in one-letter code: T-DNA border endonuclease VirD2 (424 aa).

2 disordered regions span residues 206 to 269 and 321 to 424; these read AQKI…GSSI and RPVT…RGGT. Residues 212–221 show a composition bias toward acidic residues; sequence EDTDFDETSP. A compositionally biased stretch (basic and acidic residues) spans 243-261; that stretch reads EPDRATRHDKQPLEQHARF. Residues 330 to 339 show a composition bias toward basic residues; sequence TVKRQQRSKR. Basic and acidic residues-rich tracts occupy residues 394–408 and 415–424; these read SPKR…ELGG and NRRDDGRGGT.

Functionally, tumor formation by A.tumefaciens involves the transfer and integration of a defined segment (T-DNA) of Ti plasmid DNA into the plant nuclear genome. The virD operon encodes a site-specific endonuclease that cleaves at a unique site within both 24 bp direct repeats flanking the T-DNA. The protein is T-DNA border endonuclease VirD2 (virD2) of Rhizobium radiobacter (Agrobacterium tumefaciens).